The sequence spans 188 residues: Large ribosomal subunit protein bL32m (188 aa).

Residues Cys110, Cys113, Cys123, and Cys126 each contribute to the Zn(2+) site. Positions 164 to 188 (TPSEQDQGKRIIERDRKRPSWFTQN) are disordered. Residues 169 to 181 (DQGKRIIERDRKR) show a composition bias toward basic and acidic residues.

Belongs to the bacterial ribosomal protein bL32 family. As to quaternary structure, component of the mitochondrial large ribosomal subunit (mt-LSU). Mature mammalian 55S mitochondrial ribosomes consist of a small (28S) and a large (39S) subunit. The 28S small subunit contains a 12S ribosomal RNA (12S mt-rRNA) and 30 different proteins. The 39S large subunit contains a 16S rRNA (16S mt-rRNA), a copy of mitochondrial valine transfer RNA (mt-tRNA(Val)), which plays an integral structural role, and 52 different proteins. bL32m has a zinc binding site. MRPL32 precursor is processed by the m-AAA protease (composed of AFG3L2 and SPG7), which cleaves the N-terminal transit peptide. Cleavage by the m-AAA protease takes place prior to assembly into the large subunit, an essential step for mitochondrial ribosome (mitoribosome) assembly. Proper processing by the m-AAA protease is dependent on the zinc-binding region within the tightly folded C-terminal domain of MRPL32: zinc-dependent folding halts degradation initiated from the N-terminus and triggers the release of mature MRPL32.

The protein resides in the mitochondrion. In terms of biological role, component of the mitochondrial large ribosomal subunit (mt-LSU). The mitochondrial ribosome (mitoribosome) is a large ribonucleoprotein complex responsible for the synthesis of proteins inside mitochondria. This is Large ribosomal subunit protein bL32m (MRPL32) from Homo sapiens (Human).